We begin with the raw amino-acid sequence, 419 residues long: Elongation factor Tu, chloroplastic (419 aa).

The region spanning 10 to 214 (KPHVNIGTIG…AVDSYIPTPK (205 aa)) is the tr-type G domain. The segment at 19–26 (GHVDHGKT) is G1. 19–26 (GHVDHGKT) lines the GTP pocket. Residue Thr-26 coordinates Mg(2+). Positions 60–64 (GITIN) are G2. The G3 stretch occupies residues 81–84 (DCPG). Residues 81 to 85 (DCPGH) and 136 to 139 (NKED) contribute to the GTP site. The tract at residues 136–139 (NKED) is G4. The interval 174-176 (SAL) is G5.

This sequence belongs to the TRAFAC class translation factor GTPase superfamily. Classic translation factor GTPase family. EF-Tu/EF-1A subfamily.

It is found in the plastid. The protein localises to the chloroplast. It catalyses the reaction GTP + H2O = GDP + phosphate + H(+). In terms of biological role, GTP hydrolase that promotes the GTP-dependent binding of aminoacyl-tRNA to the A-site of ribosomes during protein biosynthesis. This is Elongation factor Tu, chloroplastic (tufA) from Chara vulgaris (Common stonewort).